The chain runs to 513 residues: ATP synthase subunit alpha (513 aa).

169–176 (GDRQIGKT) contacts ATP.

This sequence belongs to the ATPase alpha/beta chains family. As to quaternary structure, F-type ATPases have 2 components, CF(1) - the catalytic core - and CF(0) - the membrane proton channel. CF(1) has five subunits: alpha(3), beta(3), gamma(1), delta(1), epsilon(1). CF(0) has three main subunits: a(1), b(2) and c(9-12). The alpha and beta chains form an alternating ring which encloses part of the gamma chain. CF(1) is attached to CF(0) by a central stalk formed by the gamma and epsilon chains, while a peripheral stalk is formed by the delta and b chains.

It is found in the cell inner membrane. The catalysed reaction is ATP + H2O + 4 H(+)(in) = ADP + phosphate + 5 H(+)(out). In terms of biological role, produces ATP from ADP in the presence of a proton gradient across the membrane. The alpha chain is a regulatory subunit. This is ATP synthase subunit alpha from Vibrio alginolyticus.